A 559-amino-acid chain; its full sequence is Forkhead box protein O6 (559 aa).

Disordered stretches follow at residues Met1–Leu77 and Ser163–Val183. Positions Trp88–Ala182 form a DNA-binding region, fork-head. Phosphoserine is present on Ser184. Disordered regions lie at residues Lys197–Ala232 and Asn534–Gly559. 2 stretches are compositionally biased toward pro residues: residues Asp213–Gly222 and Leu539–Asn553.

Phosphorylation of Ser-184 is be important in regulating the transacriptional activity. As to expression, expressed in brain in areas of the nucleus accumbens, cingulate cortex, parts of the amygdala and in the hippocampus.

The protein resides in the cytoplasm. Its subcellular location is the nucleus. In terms of biological role, transcriptional activator. The protein is Forkhead box protein O6 (Foxo6) of Mus musculus (Mouse).